A 428-amino-acid chain; its full sequence is Enolase (428 aa).

Q163 provides a ligand contact to (2R)-2-phosphoglycerate. The active-site Proton donor is the E205. Mg(2+)-binding residues include D242, E285, and D312. (2R)-2-phosphoglycerate contacts are provided by K337, R366, S367, and K388. K337 serves as the catalytic Proton acceptor.

This sequence belongs to the enolase family. Mg(2+) serves as cofactor.

It is found in the cytoplasm. The protein localises to the secreted. Its subcellular location is the cell surface. It catalyses the reaction (2R)-2-phosphoglycerate = phosphoenolpyruvate + H2O. It functions in the pathway carbohydrate degradation; glycolysis; pyruvate from D-glyceraldehyde 3-phosphate: step 4/5. Functionally, catalyzes the reversible conversion of 2-phosphoglycerate (2-PG) into phosphoenolpyruvate (PEP). It is essential for the degradation of carbohydrates via glycolysis. The protein is Enolase of Brevibacillus brevis (strain 47 / JCM 6285 / NBRC 100599).